Here is a 1368-residue protein sequence, read N- to C-terminus: DNA-directed RNA polymerase subunit beta (1368 aa).

It belongs to the RNA polymerase beta chain family. As to quaternary structure, the RNAP catalytic core consists of 2 alpha, 1 beta, 1 beta' and 1 omega subunit. When a sigma factor is associated with the core the holoenzyme is formed, which can initiate transcription.

The enzyme catalyses RNA(n) + a ribonucleoside 5'-triphosphate = RNA(n+1) + diphosphate. DNA-dependent RNA polymerase catalyzes the transcription of DNA into RNA using the four ribonucleoside triphosphates as substrates. The chain is DNA-directed RNA polymerase subunit beta from Legionella pneumophila (strain Lens).